The chain runs to 322 residues: NADH-cytochrome b5 reductase 2 (322 aa).

Residues 32-48 (LAPIYISVGLAGLGVGL) traverse the membrane as a helical segment. In terms of domain architecture, FAD-binding FR-type spans 72–176 (QGWVDLKLSE…KGPIPKYPWE (105 aa)). 179–214 (KHKHICLIAGGTGITPMYQLARQIFKNPEDQTKVTL) lines the FAD pocket.

The protein belongs to the flavoprotein pyridine nucleotide cytochrome reductase family. The cofactor is FAD.

Its subcellular location is the mitochondrion outer membrane. The enzyme catalyses 2 Fe(III)-[cytochrome b5] + NADH = 2 Fe(II)-[cytochrome b5] + NAD(+) + H(+). May mediate the reduction of outer membrane cytochrome b5. In Aspergillus clavatus (strain ATCC 1007 / CBS 513.65 / DSM 816 / NCTC 3887 / NRRL 1 / QM 1276 / 107), this protein is NADH-cytochrome b5 reductase 2 (mcr1).